A 321-amino-acid polypeptide reads, in one-letter code: Lipoyl synthase (321 aa).

Positions 68, 73, 79, 94, 98, 101, and 308 each coordinate [4Fe-4S] cluster. The 218-residue stretch at 80 to 297 (FNHGTATFMI…KEIALELGFT (218 aa)) folds into the Radical SAM core domain.

This sequence belongs to the radical SAM superfamily. Lipoyl synthase family. It depends on [4Fe-4S] cluster as a cofactor.

Its subcellular location is the cytoplasm. The enzyme catalyses [[Fe-S] cluster scaffold protein carrying a second [4Fe-4S](2+) cluster] + N(6)-octanoyl-L-lysyl-[protein] + 2 oxidized [2Fe-2S]-[ferredoxin] + 2 S-adenosyl-L-methionine + 4 H(+) = [[Fe-S] cluster scaffold protein] + N(6)-[(R)-dihydrolipoyl]-L-lysyl-[protein] + 4 Fe(3+) + 2 hydrogen sulfide + 2 5'-deoxyadenosine + 2 L-methionine + 2 reduced [2Fe-2S]-[ferredoxin]. It participates in protein modification; protein lipoylation via endogenous pathway; protein N(6)-(lipoyl)lysine from octanoyl-[acyl-carrier-protein]: step 2/2. Functionally, catalyzes the radical-mediated insertion of two sulfur atoms into the C-6 and C-8 positions of the octanoyl moiety bound to the lipoyl domains of lipoate-dependent enzymes, thereby converting the octanoylated domains into lipoylated derivatives. The chain is Lipoyl synthase from Vibrio vulnificus (strain CMCP6).